A 272-amino-acid chain; its full sequence is MNKIFAAFKPRGLSSNAFLSTLKKKYKNKKAGYSGTLDPFAKGVLIVAFGQYTKLFRFLKKTPKTYKATLWLGVYSLSLDDQNIKEIKNIKEFDLANLQQIIDQMQGIISYTPPQFSAKRINGTRAYELAKKGIEANLKPCQMEVFDCKILSYNHPFLNIEITVSEGAYIRSYCELFARKLGINATLSSLERIKEGKFVYNNEKSLNVLKYIDLKPNFIKELNKLENGAKIFVEELEFHDEGDYYIETEKYFSIINIKENTVKYLLNKVEKC.

The active-site Nucleophile is the aspartate 38.

It belongs to the pseudouridine synthase TruB family. Type 1 subfamily.

The enzyme catalyses uridine(55) in tRNA = pseudouridine(55) in tRNA. Functionally, responsible for synthesis of pseudouridine from uracil-55 in the psi GC loop of transfer RNAs. The sequence is that of tRNA pseudouridine synthase B from Campylobacter jejuni subsp. jejuni serotype O:23/36 (strain 81-176).